The sequence spans 279 residues: Phosphatidylglycerol--prolipoprotein diacylglyceryl transferase (279 aa).

Transmembrane regions (helical) follow at residues Trp25–Val45, Tyr60–Tyr80, Phe103–Ile123, Leu133–Ile153, Pro181–Tyr201, Gly209–Leu229, and Ile236–Leu256. Arg152 is a binding site for a 1,2-diacyl-sn-glycero-3-phospho-(1'-sn-glycerol).

It belongs to the Lgt family.

The protein localises to the cell inner membrane. It carries out the reaction L-cysteinyl-[prolipoprotein] + a 1,2-diacyl-sn-glycero-3-phospho-(1'-sn-glycerol) = an S-1,2-diacyl-sn-glyceryl-L-cysteinyl-[prolipoprotein] + sn-glycerol 1-phosphate + H(+). It participates in protein modification; lipoprotein biosynthesis (diacylglyceryl transfer). Catalyzes the transfer of the diacylglyceryl group from phosphatidylglycerol to the sulfhydryl group of the N-terminal cysteine of a prolipoprotein, the first step in the formation of mature lipoproteins. This is Phosphatidylglycerol--prolipoprotein diacylglyceryl transferase from Campylobacter hominis (strain ATCC BAA-381 / DSM 21671 / CCUG 45161 / LMG 19568 / NCTC 13146 / CH001A).